A 414-amino-acid chain; its full sequence is MRVILLLAFLISLTECQWTSEDLALYDLVEEVGVNFYEWFDIPRDASSNQVKKAYRKLTLEWHPDRNSAPDATEKFRQVAGIYEVLKTTELREKYDNVLENGLPSWRHPMYYYRRMRKLAWYEGILVLLFIGTIAHYLMMWAAYFEKTLVYKQNVKKSRKSKKEDPAEAEKLMKQALEEYLPKYSELLPIILARGTVTLFKNLALTAKDAMTPKEVEPEEPTEEELAQQRRQQRAAAAPQQLEFKFEVAQGMKAVSTNDPEMEKKYAAENEVVAQKQSGATWTPDELASLVRLSTEKYPAGTPNRWEQMGRVLNRSAEDVIAMAGKMKQMKQEDYTKLLMTTIQQSVPVEEKSEDDWSQAEQKAFETALQKYPKGTDERWERISEEIGSKTKKQVMVRFKQLAEMIRKKKTNDT.

A signal peptide spans 1–16 (MRVILLLAFLISLTEC). The Myb-like 1 domain occupies 20–59 (SEDLALYDLVEEVGVNFYEWFDIPRDASSNQVKKAYRKLT). The J domain occupies 35–99 (NFYEWFDIPR…ELREKYDNVL (65 aa)). A helical membrane pass occupies residues 125–145 (ILVLLFIGTIAHYLMMWAAYF). Residues 211-234 (MTPKEVEPEEPTEEELAQQRRQQR) form a disordered region. Residues 217–226 (EPEEPTEEEL) show a composition bias toward acidic residues. Residues 274 to 320 (AQKQSGATWTPDELASLVRLSTEKYPAGTPNRWEQMGRVLNRSAEDV) enclose the Myb-like 2 domain. The SANT domain occupies 352 to 407 (KSEDDWSQAEQKAFETALQKYPKGTDERWERISEEIGSKTKKQVMVRFKQLAEMIR).

It is found in the nucleus membrane. This is an uncharacterized protein from Caenorhabditis elegans.